Reading from the N-terminus, the 37-residue chain is Esculentin-2B (37 aa).

The cysteines at positions 31 and 37 are disulfide-linked.

This sequence belongs to the frog skin active peptide (FSAP) family. Esculentin subfamily. As to expression, expressed by the skin glands.

It localises to the secreted. In terms of biological role, shows antibacterial activity against representative Gram-negative and Gram-positive bacterial species, and hemolytic activity. The sequence is that of Esculentin-2B from Pelophylax lessonae (Pool frog).